A 208-amino-acid chain; its full sequence is V-type ATP synthase subunit D (208 aa).

This sequence belongs to the V-ATPase D subunit family.

Its function is as follows. Produces ATP from ADP in the presence of a proton gradient across the membrane. The protein is V-type ATP synthase subunit D of Streptococcus pyogenes serotype M49 (strain NZ131).